The sequence spans 3926 residues: Protein bassoon (3926 aa).

The interval 1-161 is disordered; sequence MGNEVSLEGG…PTSPYSVPQI (161 aa). Residue G2 is the site of N-myristoyl glycine attachment. Pro residues-rich tracts occupy residues 15–30 and 58–72; these read PLPP…PGPG and PPVP…PGPG. Residues 23–32 form a 5 X 2 AA tandem repeats of P-G region; the sequence is PGPGPGPGPG. A 7 X 2 AA tandem repeats of P-G region spans residues 61–74; it reads PGPGPGPGPGPGPG. Composition is skewed to polar residues over residues 90–105 and 130–157; these read RAAS…TTPG and QVDS…SPYS. The residue at position 145 (S145) is a Phosphoserine. Omega-N-methylarginine is present on R148. 2 C4-type zinc fingers span residues 170–193 and 198–220; these read CPIC…CTQC and CNQC…CLNC. Disordered stretches follow at residues 231–343 and 366–459; these read TTAP…EQTQ and SVQP…KTMP. Polar residues predominate over residues 233–243; sequence APRSKSQQQLH. Residues S244 and S248 each carry the phosphoserine modification. The span at 366–377 shows a compositional bias: polar residues; that stretch reads SVQPEADTQGQP. 2 C4-type zinc fingers span residues 465 to 488 and 493 to 515; these read CPLC…CTTC and CNLC…CLNC. Disordered regions lie at residues 524 to 927 and 940 to 1248; these read SLGE…LQGG and GSYG…AEGT. The segment covering 552-569 has biased composition (low complexity); sequence PLKQKGPQGLGQPSGPLP. 3 tandem repeats follow at residues 571-577, 578-584, and 585-591. The interval 571-591 is 3 X 7 AA tandem repeats of K-A-S-P-[LQ]-[APS]-[KST]; that stretch reads KASPLSTKASPLPSKASPQAK. Pro residues predominate over residues 619–631; it reads MPKPPPETTPTPA. Residues 671–680 are compositionally biased toward polar residues; that stretch reads QDASRSPQSL. Positions 681-698 are enriched in low complexity; it reads SDTGYSSDGISSSQSEIT. The span at 771–787 shows a compositional bias: acidic residues; the sequence is FDSDEELEDILEEDEDS. The segment covering 788-797 has biased composition (basic and acidic residues); sequence AEWRRRREQQ. The segment covering 851 to 862 has biased composition (acidic residues); the sequence is SAEEDNLEEDDT. Residue R867 is modified to Omega-N-methylarginine. Position 970 is a phosphoserine (S970). Residues 984–1001 show a composition bias toward low complexity; that stretch reads PASTPSYTSGTSPTSLSS. Residues 1037–1092 adopt a coiled-coil conformation; it reads IEDSSEEEELREEEELLREQEKMREVEQQRIRSTARKTRRDKEELRAQRRRERSKT. The span at 1039 to 1052 shows a compositional bias: acidic residues; that stretch reads DSSEEEELREEEEL. S1040 and S1041 each carry phosphoserine. The segment covering 1053 to 1066 has biased composition (basic and acidic residues); that stretch reads LREQEKMREVEQQR. At S1090 the chain carries Phosphoserine. Position 1092 is a phosphothreonine (T1092). 2 positions are modified to phosphoserine: S1098 and S1104. Residues 1107–1122 are compositionally biased toward basic and acidic residues; that stretch reads EELRQAAEMEELHRSS. Low complexity-rich tracts occupy residues 1123-1133 and 1163-1180; these read CSEYSPSPSLD and SPTE…SGRP. The stretch at 1181 to 1208 forms a coiled coil; the sequence is LKSAEEAYEEMMRKAELLQRQQGQAAGA. A compositionally biased stretch (basic and acidic residues) spans 1182-1197; the sequence is KSAEEAYEEMMRKAEL. Residues 1199-1209 are compositionally biased toward low complexity; the sequence is QRQQGQAAGAR. Residue S1226 is modified to Phosphoserine. Residues 1276 to 1294 adopt a coiled-coil conformation; that stretch reads RDLAFAEDKKKEKQFLNAE. Disordered regions lie at residues 1298-1547 and 1570-1620; these read MDPM…RLVW and RMVH…RVPS. Low complexity predominate over residues 1322-1332; the sequence is SFSTPTSSDSS. T1343 is a glycosylation site (O-linked (GlcNAc) threonine). Residues 1346-1355 are compositionally biased toward basic and acidic residues; sequence FAKETQDPLK. Composition is skewed to low complexity over residues 1358-1367 and 1377-1392; these read SSPASPSSAS and GPGT…CPAG. The O-linked (GlcNAc) threonine glycan is linked to T1384. Positions 1408–1434 are enriched in polar residues; that stretch reads RSPSPSSTAHSYGHSPTTANYGSQTED. Low complexity predominate over residues 1466–1493; the sequence is PSRAYSYFASSSPPLSPSSPSESPTFSP. Phosphoserine is present on residues S1477, S1486, and S1488. Positions 1570–1598 are enriched in polar residues; it reads RMVHASASTSPLCSPTETQPTTHGYSQTT. Over residues 1606–1616 the composition is skewed to pro residues; sequence PPEPPGPPGFP. Omega-N-methylarginine occurs at positions 1787 and 1791. R1801 carries the asymmetric dimethylarginine; alternate modification. Position 1801 is an omega-N-methylarginine; alternate (R1801). At R1813 the chain carries Omega-N-methylarginine. The segment at 1924–1978 is disordered; sequence PEKSMADAAPPGQSSSPFYGPRDPEPPEPPTYRAQGVVGPGPHEEQRPYPQGLPG. A phosphoserine mark is found at S1985 and S2041. Residues R2046 and R2076 each carry the omega-N-methylarginine modification. Asymmetric dimethylarginine occurs at positions 2250, 2260, and 2266. Residues 2287–2309 form a disordered region; sequence AAKAPGAGGPSRPEMPVGAAREE. An O-linked (GlcNAc) threonine glycan is attached at T2314. Residues 2324-2341 show a composition bias toward low complexity; sequence GAPAPAPLAGQKPPADAA. Disordered stretches follow at residues 2324–2370 and 2532–2568; these read GAPA…KQQE and PSSA…ACEL. Positions 2351–2476 form a coiled coil; the sequence is RPGFEKEEAS…EEQKQRQKAP (126 aa). Basic and acidic residues predominate over residues 2353–2370; it reads GFEKEEASQEERQRKQQE. The segment covering 2533–2543 has biased composition (polar residues); sequence SSASDMSLQTE. Residue S2570 is modified to Phosphoserine. Phosphothreonine occurs at positions 2587 and 2614. Positions 2601–2655 are disordered; the sequence is RRRARRSADCSVQTDDEDSAEWEQPVRRRRSRLPRHSDSGSDSKHDATASSSSAA. Over residues 2635 to 2647 the composition is skewed to basic and acidic residues; sequence RHSDSGSDSKHDA. The O-linked (GlcNAc) threonine glycan is linked to T2691. Residues 2721–3268 form an interaction with DAO region; sequence EPDGQAQGVA…PGSSGRPGKE (548 aa). 3 positions are modified to phosphoserine: S2802, S2851, and S2857. Positions 2845–2865 are disordered; the sequence is TLQRSLSDPKPLSPTAEESAK. An O-linked (GlcNAc) threonine glycan is attached at T2936. Residues 2939–2981 are a coiled coil; the sequence is SLLRELDRDLRLVEHESTKLRKKQAELDEEEKEIDAKLKYLEL. Position 3013 is a phosphoserine (S3013). Residues 3039–3055 show a composition bias toward low complexity; it reads AAAPATPSGPTAFQQPR. 3 disordered regions span residues 3039–3375, 3424–3551, and 3572–3897; these read AAAP…FSPI, GMSS…PRAH, and EAYH…SVFS. Positions 3083-3095 are enriched in pro residues; it reads YPGPSTYPAPAFP. A compositionally biased stretch (low complexity) spans 3165-3176; sequence ASPVVPMSSAPS. Residues 3205–3228 show a composition bias toward polar residues; sequence SVSQSPAPTYPSDSHYTSLEQNVP. Phosphoserine is present on S3291. 3 stretches are compositionally biased toward basic and acidic residues: residues 3321-3333, 3363-3375, and 3465-3477; these read GDSD…RVEK, QGME…FSPI, and GYER…ERLQ. S3373 carries the phosphoserine modification. R3492 is subject to Omega-N-methylarginine. Composition is skewed to basic and acidic residues over residues 3540 to 3551, 3583 to 3593, 3628 to 3647, and 3657 to 3681; these read VQEHVKDGPRAH, WFDKPRDARSD, LWPH…EHRH, and HTGE…EARP. The span at 3703–3712 shows a compositional bias: polar residues; sequence AEYSQPSRAS. The segment covering 3741 to 3807 has biased composition (low complexity); that stretch reads PQAQPQLQGR…RLQQQSQPTT (67 aa). R3808 carries the omega-N-methylarginine modification. 2 stretches are compositionally biased toward low complexity: residues 3849-3860 and 3882-3892; these read AKAPQQGRAPQA and GAPAGQPGADG.

As to quaternary structure, interacts with PCLO, ERC2/CAST1, RIMS1 and UNC13A. Interacts with TPRG1L. Interacts with DYNLL1 and DYNLL2; these interactions potentially link PTVs to dynein and myosin V motor complexes. Interacts with ATG5; this interaction is important for the regulation of presynaptic autophagy. Interacts (via C-terminus) with TRIO (via N-terminus). Interacts with CTBP1. Interacts with SIAH1; this interaction negatively regulates SIAH1 E3 ligase activity. Interacts (via coiled region) with DAO; the interaction is direct. Post-translationally, myristoylated. The N-terminal myristoylation is not sufficient for presynaptic localization. In terms of tissue distribution, exclusively expressed in brain.

Its subcellular location is the cytoplasm. It localises to the presynaptic active zone. The protein resides in the cytoskeleton. It is found in the cytoplasmic vesicle. The protein localises to the secretory vesicle. Its subcellular location is the synaptic vesicle membrane. Scaffold protein of the presynaptic cytomatrix at the active zone (CAZ) which is the place in the synapse where neurotransmitter is released. After synthesis, participates in the formation of Golgi-derived membranous organelles termed Piccolo-Bassoon transport vesicles (PTVs) that are transported along axons to sites of nascent synaptic contacts. At the presynaptic active zone, regulates the spatial organization of synaptic vesicle cluster, the protein complexes that execute membrane fusion and compensatory endocytosis. Also functions in processes other than assembly such as the regulation of specific presynaptic protein ubiquitination by interacting with SIAH1 or the regulation of presynaptic autophagy by associating with ATG5. Also mediates synapse to nucleus communication leading to reconfiguration of gene expression by associating with the transcriptional corepressor CTBP1 and by subsequently reducing the size of its pool available for nuclear import. Inhibits the activity of the proportion of DAO enzyme that localizes to the presynaptic active zone, which may modulate synaptic transmission. This chain is Protein bassoon, found in Homo sapiens (Human).